Reading from the N-terminus, the 295-residue chain is MSSSRPVFRSRWLPYLLVAPQLVITVIFFIWPAGEALWYSLQSVDPFGFSSQFVGLENFVALFHDSYYLDAFWTTIKFSALVTFSGLLVSLFFAALVDYVVRGSRFYQTLMLLPYAVAPAVAAVLWIFLFNPGRGLITHFLGEFGYDWNHAQNSGQAMFLVVFASVWKQISYNFLFFFAALQSIPRSLVEAAAIDGAGPIRRFFRLSLPLIAPVSFFLLVVNLVYAFFDTFPVIDAATAGGPVQATTTLIYKIYCEGFTGLDLSASAAQSVVLMFLVIILTVVQFRYVESKVRYQ.

Residues 1–11 (MSSSRPVFRSR) are Cytoplasmic-facing. The chain crosses the membrane as a helical span at residues 12–32 (WLPYLLVAPQLVITVIFFIWP). Residues 33–80 (AGEALWYSLQSVDPFGFSSQFVGLENFVALFHDSYYLDAFWTTIKFSA) are Periplasmic-facing. An ABC transmembrane type-1 domain is found at 76–284 (IKFSALVTFS…FLVIILTVVQ (209 aa)). A helical membrane pass occupies residues 81–101 (LVTFSGLLVSLFFAALVDYVV). Topologically, residues 102–109 (RGSRFYQT) are cytoplasmic. The helical transmembrane segment at 110–130 (LMLLPYAVAPAVAAVLWIFLF) threads the bilayer. Topologically, residues 131–157 (NPGRGLITHFLGEFGYDWNHAQNSGQA) are periplasmic. The chain crosses the membrane as a helical span at residues 158–178 (MFLVVFASVWKQISYNFLFFF). The Cytoplasmic portion of the chain corresponds to 179–207 (AALQSIPRSLVEAAAIDGAGPIRRFFRLS). A helical membrane pass occupies residues 208–228 (LPLIAPVSFFLLVVNLVYAFF). Topologically, residues 229–262 (DTFPVIDAATAGGPVQATTTLIYKIYCEGFTGLD) are periplasmic. The helical transmembrane segment at 263-283 (LSASAAQSVVLMFLVIILTVV) threads the bilayer. The Cytoplasmic segment spans residues 284–295 (QFRYVESKVRYQ).

The protein belongs to the binding-protein-dependent transport system permease family. UgpAE subfamily. The complex is composed of two ATP-binding proteins (UgpC), two transmembrane proteins (UgpA and UgpE) and a solute-binding protein (UgpB).

The protein resides in the cell inner membrane. Functionally, part of the ABC transporter complex UgpBAEC involved in sn-glycerol-3-phosphate (G3P) import. Probably responsible for the translocation of the substrate across the membrane. This chain is sn-glycerol-3-phosphate transport system permease protein UgpA (ugpA), found in Salmonella typhi.